Reading from the N-terminus, the 415-residue chain is Histidine--tRNA ligase (415 aa).

It belongs to the class-II aminoacyl-tRNA synthetase family. Homodimer.

It is found in the cytoplasm. The catalysed reaction is tRNA(His) + L-histidine + ATP = L-histidyl-tRNA(His) + AMP + diphosphate + H(+). This is Histidine--tRNA ligase from Rickettsia felis (strain ATCC VR-1525 / URRWXCal2) (Rickettsia azadi).